The following is a 98-amino-acid chain: NADH-ubiquinone oxidoreductase chain 4L (98 aa).

The next 3 helical transmembrane spans lie at 1–21 (MTLI…GLLM), 29–49 (ALLC…LTIL), and 61–81 (IILL…LVMV).

The protein belongs to the complex I subunit 4L family. As to quaternary structure, core subunit of respiratory chain NADH dehydrogenase (Complex I) which is composed of 45 different subunits.

It is found in the mitochondrion inner membrane. It catalyses the reaction a ubiquinone + NADH + 5 H(+)(in) = a ubiquinol + NAD(+) + 4 H(+)(out). Its function is as follows. Core subunit of the mitochondrial membrane respiratory chain NADH dehydrogenase (Complex I) which catalyzes electron transfer from NADH through the respiratory chain, using ubiquinone as an electron acceptor. Part of the enzyme membrane arm which is embedded in the lipid bilayer and involved in proton translocation. The sequence is that of NADH-ubiquinone oxidoreductase chain 4L (MT-ND4L) from Eschrichtius robustus (California gray whale).